The following is a 274-amino-acid chain: Acetylaranotin bis-thiomethyltransferase (274 aa).

It belongs to the class I-like SAM-binding methyltransferase superfamily.

Its pathway is mycotoxin biosynthesis. Its function is as follows. Acetylaranotin bis-thiomethyltransferase involved in the biosynthesis of acetylaranotin derivatives, members of the epipolythiodioxopiperazine (ETP) class of toxins characterized by a disulfide-bridged cyclic dipeptide. The first step of acetylaranotin biosynthesis is performed by the NRPS ataP which produces diketopiperazine cyclo-L-Phe-L-Phe via the condensation of 2 phenylalanines (L-Phe). The ataC domain of ataTC then catalyzes the formation of bishydroxylation of cyclo-L-Phe-L-Phe. The glutathione S-transferase domain ataG in ataIMG further catalyzes the conjugation of two glutathiones to the bishydroxylated intermediate. Next, the dipeptidase ataJ removes the Glu residues. The following step is performed by the carbon sulfur lyase domain ataI of ataIMG which may convert the bis-cysteinyl adduct to yield an epidithiol intermediate. The ataT domain from ataTC then catalyzes the oxidation of the free dithiols, followed by a cyclization step catalyzed by the cytochrome P450 ataF. AtaF probably acts as an epoxidase to promote a dual epoxidation formation at C8 and C9 along with C8' and C9', followed by the spontaneous nucleophilic attack of the amide nitrogens N10 and N10' to yield an intermediate with the pyrrolidine partial structure. The final steps of acetylaranotin biosynthesis involve the acetylation and ring rearrangement of an epitetrathiodiketopiperazine intermediate to produce acetylaranotin. AtaH probably catalyzes the acetylation of epitetrathiodiketopiperazine to produce a diacetate and ataY is responsible for the formation of the dihydrooxepin moiety that converts the diacetate intermediate to acetylaranotin via acetylapoaranotin. Both enzymes could function independently in the absence of the other. The acetylaranotin bis-thiomethyltransferase ataS located outside of acetylaranotin gene cluster is the main thiomethyltransferase responsible for converting acetylaranotin and its related intermediates to their methylated forms. The chain is Acetylaranotin bis-thiomethyltransferase from Aspergillus terreus (strain NIH 2624 / FGSC A1156).